We begin with the raw amino-acid sequence, 397 residues long: Yellow-related salivary protein LJM111 (397 aa).

The first 18 residues, 1 to 18, serve as a signal peptide directing secretion; that stretch reads MKLFFFLYTFGLVQTIFG.

The protein belongs to the major royal jelly protein family. In terms of tissue distribution, salivary gland (at protein level).

The protein localises to the secreted. Probably modulates blood feeding of sand flies on vertebrate species by binding and sequestering different mediators involved in the host response. Binds biogenic amines. Binds adrenaline and noradrenaline with high affinity. Binds serotonin. Binds dopamine and octopamine. Exhibits anti-inflammatory effects in the host: reduces IL17A, TNF-alpha (TNF) and IFN-gamma (IFNG) production by host lymph node cells, suppresses expression of MHC-II and CD86, reduces TNF-alpha production and increases IL10 production, in host bone marrow-derived dendritic cells (BMDCs) stimulated by lipopolysaccharides. Reduces pain in mouse mechanical hypernociception model. This is Yellow-related salivary protein LJM111 from Lutzomyia longipalpis (Sand fly).